The following is a 164-amino-acid chain: Ecotin (164 aa).

A signal peptide spans 1–20; sequence MKMFVPAVVFAALASASAWA. A disulfide bridge links cysteine 72 with cysteine 109.

This sequence belongs to the protease inhibitor I11 (ecotin) family. Homodimer.

Its subcellular location is the periplasm. Its function is as follows. General inhibitor of pancreatic serine proteases: inhibits chymotrypsin, trypsin, elastases, factor X, kallikrein as well as a variety of other proteases. The protein is Ecotin of Salmonella paratyphi A (strain ATCC 9150 / SARB42).